The sequence spans 535 residues: Calcium-dependent protein kinase 7 (535 aa).

The tract at residues Met1–Ser29 is disordered. A lipid anchor (N-myristoyl glycine) is attached at Gly2. In terms of domain architecture, Protein kinase spans Tyr59–Ile317. ATP-binding positions include Val65–Thr73 and Lys88. The Proton acceptor role is filled by Asp183. Phosphoserine is present on Ser223. The autoinhibitory domain stretch occupies residues Ala323 to Ile353. 4 consecutive EF-hand domains span residues Glu360 to Gln395, Ile396 to Met431, Ala432 to Asn467, and Thr468 to Trp504. Asp373, Asn375, Lys379, Glu384, Asp409, Asp411, Asp413, Thr415, Glu420, Asp445, Asn447, Ser449, Tyr451, Glu456, Asp482, Asp484, Asp486, and Arg488 together coordinate Ca(2+). The residue at position 490 (Ser490) is a Phosphoserine. Position 493 (Glu493) interacts with Ca(2+).

The protein belongs to the protein kinase superfamily. Ser/Thr protein kinase family. CDPK subfamily.

It is found in the cell membrane. It catalyses the reaction L-seryl-[protein] + ATP = O-phospho-L-seryl-[protein] + ADP + H(+). The enzyme catalyses L-threonyl-[protein] + ATP = O-phospho-L-threonyl-[protein] + ADP + H(+). Its activity is regulated as follows. Activated by calcium. Autophosphorylation may play an important role in the regulation of the kinase activity. Functionally, may play a role in signal transduction pathways that involve calcium as a second messenger. The protein is Calcium-dependent protein kinase 7 (CPK7) of Arabidopsis thaliana (Mouse-ear cress).